Here is a 520-residue protein sequence, read N- to C-terminus: Cytochrome P450 72A397 (520 aa).

The chain crosses the membrane as a helical span at residues 14–34 (AVAVAVVVVGWAWKVLNWVWV). Heme is bound at residue Cys-468.

It belongs to the cytochrome P450 family. It depends on heme as a cofactor.

It is found in the membrane. The enzyme catalyses oleanolate + reduced [NADPH--hemoprotein reductase] + O2 = hederagenin + oxidized [NADPH--hemoprotein reductase] + H2O + H(+). Functionally, catalyzes the oxidation of oleanolate at the C-23 position to form hederagenin. The sequence is that of Cytochrome P450 72A397 from Kalopanax septemlobus (Castor aralia).